The sequence spans 120 residues: Ribosomal protein eL22-like 1 (120 aa).

This sequence belongs to the eukaryotic ribosomal protein eL22 family.

This Xenopus tropicalis (Western clawed frog) protein is Ribosomal protein eL22-like 1 (rpl22l1).